A 341-amino-acid chain; its full sequence is Transcription factor ETV7 (341 aa).

Positions 33–117 constitute a PNT domain; sequence NLLGEGGICK…ELLQYIKTQR (85 aa). Residues 224 to 305 constitute a DNA-binding region (ETS); sequence RLLWDYVYQL…PGQKLLFRFL (82 aa). Residues 315–341 form a disordered region; the sequence is KHSHLEPLESQEQDRIEFKDKRPEISP.

Belongs to the ETS family. As to expression, expressed in hematopoietic tissues.

It is found in the nucleus. Functionally, transcriptional repressor; binds to the DNA sequence 5'-CCGGAAGT-3'. Isoform A does not seem to have a repressor activity. Isoform C does not seem to have a repressor activity. This Homo sapiens (Human) protein is Transcription factor ETV7 (ETV7).